A 229-amino-acid chain; its full sequence is Cytochrome c oxidase subunit 2 (229 aa).

Residues 1–26 are Mitochondrial intermembrane-facing; it reads MSTWANLGLQDSASPLMEQLIFFHDH. Residues 27–48 traverse the membrane as a helical segment; sequence ALLILVMITVLVGYLMFMLFFN. Residues 49–62 lie on the Mitochondrial matrix side of the membrane; that stretch reads SYVNRFLLHGQLIE. A helical transmembrane segment spans residues 63–82; sequence MIWTILPAIILLFIAMPSLR. Topologically, residues 83–229 are mitochondrial intermembrane; the sequence is LLYLLDEINE…IKWISSTVNS (147 aa). Residues His161, Cys196, Glu198, Cys200, His204, and Met207 each contribute to the Cu cation site. A Mg(2+)-binding site is contributed by Glu198.

Belongs to the cytochrome c oxidase subunit 2 family. In terms of assembly, component of the cytochrome c oxidase (complex IV, CIV), a multisubunit enzyme composed of a catalytic core of 3 subunits and several supernumerary subunits. The complex exists as a monomer or a dimer and forms supercomplexes (SCs) in the inner mitochondrial membrane with ubiquinol-cytochrome c oxidoreductase (cytochrome b-c1 complex, complex III, CIII). Cu cation is required as a cofactor.

It localises to the mitochondrion inner membrane. The enzyme catalyses 4 Fe(II)-[cytochrome c] + O2 + 8 H(+)(in) = 4 Fe(III)-[cytochrome c] + 2 H2O + 4 H(+)(out). In terms of biological role, component of the cytochrome c oxidase, the last enzyme in the mitochondrial electron transport chain which drives oxidative phosphorylation. The respiratory chain contains 3 multisubunit complexes succinate dehydrogenase (complex II, CII), ubiquinol-cytochrome c oxidoreductase (cytochrome b-c1 complex, complex III, CIII) and cytochrome c oxidase (complex IV, CIV), that cooperate to transfer electrons derived from NADH and succinate to molecular oxygen, creating an electrochemical gradient over the inner membrane that drives transmembrane transport and the ATP synthase. Cytochrome c oxidase is the component of the respiratory chain that catalyzes the reduction of oxygen to water. Electrons originating from reduced cytochrome c in the intermembrane space (IMS) are transferred via the dinuclear copper A center (CU(A)) of subunit 2 and heme A of subunit 1 to the active site in subunit 1, a binuclear center (BNC) formed by heme A3 and copper B (CU(B)). The BNC reduces molecular oxygen to 2 water molecules using 4 electrons from cytochrome c in the IMS and 4 protons from the mitochondrial matrix. This chain is Cytochrome c oxidase subunit 2 (mt:CoII), found in Drosophila lowei (Fruit fly).